The chain runs to 407 residues: Indoleamine 2,3-dioxygenase 1 (407 aa).

His350 contributes to the heme b binding site. The interval 362-407 (SKKKPTDGDKSEEPSNVESRGTGGTNPMTFLRSVKDTTEKALLSWP) is disordered. The segment covering 365-374 (KPTDGDKSEE) has biased composition (basic and acidic residues).

Belongs to the indoleamine 2,3-dioxygenase family. In terms of assembly, monomer. Requires heme b as cofactor. In terms of tissue distribution, highly expressed in epididymis, duodemum, jejunum, ileum, colon and spleen. Highly expressed in epididymis, prostate, duodemum, jejunum, ileum, colon and spleen, not detected in the liver (at protein level). Expressed in tumors only upon exposure to IFN gamma. Constitutively expressed in placenta in trophoblast cells. Expression is restricted to perinuclear regions of primary trophoblast giant cells (TGCs) of fetal origin at mid-gestation (10.5 dpc). After placentation (14 dpc), no IDO expression was detected at the maternal-fetal interface.

The protein localises to the cytoplasm. It localises to the cytosol. The enzyme catalyses D-tryptophan + O2 = N-formyl-D-kynurenine. It carries out the reaction L-tryptophan + O2 = N-formyl-L-kynurenine. With respect to regulation, activity is inhibited by and MTH-trp (methylthiohydantoin-DL-tryptophan), modestly inhibited by L-1MT (1-methyl-L-tryptophan) but not D-1MT (1-methyl-D-tryptophan). Its function is as follows. Catalyzes the first and rate limiting step of the catabolism of the essential amino acid tryptophan along the kynurenine pathway. Involved in the peripheral immune tolerance, contributing to maintain homeostasis by preventing autoimmunity or immunopathology that would result from uncontrolled and overreacting immune responses. Tryptophan shortage inhibits T lymphocytes division and accumulation of tryptophan catabolites induces T-cell apoptosis and differentiation of regulatory T-cells. Acts as a suppressor of anti-tumor immunity. Limits the growth of intracellular pathogens by depriving tryptophan. Protects the fetus from maternal immune rejection. The sequence is that of Indoleamine 2,3-dioxygenase 1 from Mus musculus (Mouse).